A 58-amino-acid polypeptide reads, in one-letter code: Large ribosomal subunit protein uL30 (58 aa).

Belongs to the universal ribosomal protein uL30 family. As to quaternary structure, part of the 50S ribosomal subunit.

In Bacteroides thetaiotaomicron (strain ATCC 29148 / DSM 2079 / JCM 5827 / CCUG 10774 / NCTC 10582 / VPI-5482 / E50), this protein is Large ribosomal subunit protein uL30.